Here is a 269-residue protein sequence, read N- to C-terminus: Shikimate dehydrogenase (NADP(+)) (269 aa).

Shikimate is bound by residues 17-19 (SKS) and Thr64. The active-site Proton acceptor is Lys68. Position 80 (Asp80) interacts with NADP(+). 2 residues coordinate shikimate: Asn89 and Asp105. NADP(+) contacts are provided by residues 130–134 (GAGGA), 154–159 (NRTHAK), and Met213. Residue Tyr215 coordinates shikimate. Residue Gly237 coordinates NADP(+).

It belongs to the shikimate dehydrogenase family. In terms of assembly, homodimer.

The catalysed reaction is shikimate + NADP(+) = 3-dehydroshikimate + NADPH + H(+). It participates in metabolic intermediate biosynthesis; chorismate biosynthesis; chorismate from D-erythrose 4-phosphate and phosphoenolpyruvate: step 4/7. In terms of biological role, involved in the biosynthesis of the chorismate, which leads to the biosynthesis of aromatic amino acids. Catalyzes the reversible NADPH linked reduction of 3-dehydroshikimate (DHSA) to yield shikimate (SA). The sequence is that of Shikimate dehydrogenase (NADP(+)) from Neisseria polysaccharea.